Reading from the N-terminus, the 70-residue chain is Large ribosomal subunit protein bL31 (70 aa).

K8 is subject to N6-acetyllysine. Residues C16, C18, C37, and C40 each coordinate Zn(2+).

It belongs to the bacterial ribosomal protein bL31 family. Type A subfamily. Part of the 50S ribosomal subunit. The cofactor is Zn(2+).

Functionally, binds the 23S rRNA. This Escherichia coli O6:K15:H31 (strain 536 / UPEC) protein is Large ribosomal subunit protein bL31.